A 415-amino-acid chain; its full sequence is Actin-like protein 9 (415 aa).

A disordered region spans residues 1–22 (MDVNGHPKFQPSPETDGPLPLT).

Belongs to the actin family. In terms of assembly, interacts with ACTL7A.

It localises to the cytoplasmic vesicle. Its subcellular location is the secretory vesicle. It is found in the acrosome. The protein localises to the cytoplasm. The protein resides in the cytoskeleton. It localises to the perinuclear theca. Its function is as follows. Testis-specic protein that plays an important role in fusion of proacrosomal vesicles and perinuclear theca formation. The chain is Actin-like protein 9 (Actl9) from Mus musculus (Mouse).